The primary structure comprises 971 residues: Oncostatin-M-specific receptor subunit beta (971 aa).

Residues 1-23 (MAFSVVLHPAFLLAVLSLRASRS) form the signal peptide. The Extracellular segment spans residues 24-737 (EVLEEPLPLT…VTTPDARSHM (714 aa)). N-linked (GlcNAc...) asparagine glycans are attached at residues Asn-74, Asn-97, Asn-130, Asn-162, and Asn-239. Cys-242 and Cys-252 are oxidised to a cystine. Asn-271, Asn-304, Asn-323, and Asn-377 each carry an N-linked (GlcNAc...) asparagine glycan. Fibronectin type-III domains follow at residues 332-425 (APQD…TPET), 427-523 (PSQA…SNDS), 524-620 (GHEE…TQEL), and 622-733 (PLVN…TPDA). The WSXWS motif signature appears at 412–416 (WSDWT). 5 N-linked (GlcNAc...) asparagine glycosylation sites follow: Asn-491, Asn-541, Asn-577, Asn-689, and Asn-722. A helical membrane pass occupies residues 738–758 (LLQIILPMTLCVLLSIIVCYW). The Cytoplasmic segment spans residues 759–971 (KSQWVKEKCY…STVLLGQGEQ (213 aa)). The Box 1 motif motif lies at 767–775 (CYPDIPNPY). The segment at 949-971 (LASPSLKEDNSLTSTVLLGQGEQ) is disordered. Residues 959-971 (SLTSTVLLGQGEQ) show a composition bias toward polar residues.

This sequence belongs to the type I cytokine receptor family. Type 2 subfamily. As to quaternary structure, heterodimer composed of OSMR and IL6ST (type II OSM receptor). Heterodimer with IL31RA to form the IL31 receptor. As to expression, widely expressed. Expressed at highest levels in the lung, heart, thymus and spleen. Expressed in dorsal root ganglia.

The protein localises to the membrane. Associates with IL31RA to form the IL31 receptor. Binds IL31 to activate STAT3 and possibly STAT1 and STAT5. Capable of transducing OSM-specific signaling events. The protein is Oncostatin-M-specific receptor subunit beta (Osmr) of Mus musculus (Mouse).